The sequence spans 108 residues: UPF0060 membrane protein YnfA (108 aa).

Over 1–5 (MLKTT) the chain is Periplasmic. A helical transmembrane segment spans residues 6–26 (LLFFVTALCEIIGCFLPWLWI). At 27–30 (KRGA) the chain is on the cytoplasmic side. A helical membrane pass occupies residues 31-51 (SVWWLLPAAASLALFVWLLTL). The Periplasmic portion of the chain corresponds to 52-60 (HPAASGRVY). Residues 61 to 81 (AAYGGVYVCTALLWLRVVDGV) form a helical membrane-spanning segment. The Cytoplasmic segment spans residues 82–84 (RLT). A helical membrane pass occupies residues 85–105 (VYDWCGALIALCGMLIIVVGW). Over 106–108 (GRT) the chain is Periplasmic.

The protein belongs to the UPF0060 family.

The protein localises to the cell inner membrane. The sequence is that of UPF0060 membrane protein YnfA from Salmonella paratyphi A (strain ATCC 9150 / SARB42).